The primary structure comprises 380 residues: Cyclohexane-1-carbonyl-CoA dehydrogenase (380 aa).

The protein belongs to the acyl-CoA dehydrogenase family. As to quaternary structure, homotetramer. FAD is required as a cofactor.

It catalyses the reaction cyclohexane-1-carbonyl-CoA + oxidized [electron-transfer flavoprotein] + H(+) = cyclohex-1-ene-1-carbonyl-CoA + reduced [electron-transfer flavoprotein]. Functionally, acyl-CoA dehydrogenase involved in the anaerobic degradation of cyclohexane carboxylic acid (CHC). Catalyzes the 1,2-dehydrogenation of cyclohexane-1-carbonyl-CoA (CHCoA) to cyclohex-1-ene-1-carbonyl-CoA (CHeneCoA). An alternative substrate, cyclohex-3-ene-1-carboxyl-CoA can be converted to the corresponding cyclohexadiene-1-carboxyl-CoA isomers (30% rate compared to CHC). The polypeptide is Cyclohexane-1-carbonyl-CoA dehydrogenase (Geobacter metallireducens (strain ATCC 53774 / DSM 7210 / GS-15)).